The primary structure comprises 207 residues: LexA repressor (207 aa).

Residues 28-48 constitute a DNA-binding region (H-T-H motif); that stretch reads RAEIARHLGFKSANAAEEHLK. Residues Ser-124 and Lys-161 each act as for autocatalytic cleavage activity in the active site.

Belongs to the peptidase S24 family. In terms of assembly, homodimer.

It catalyses the reaction Hydrolysis of Ala-|-Gly bond in repressor LexA.. Functionally, represses a number of genes involved in the response to DNA damage (SOS response), including recA and lexA. In the presence of single-stranded DNA, RecA interacts with LexA causing an autocatalytic cleavage which disrupts the DNA-binding part of LexA, leading to derepression of the SOS regulon and eventually DNA repair. This Pseudoalteromonas atlantica (strain T6c / ATCC BAA-1087) protein is LexA repressor.